Here is a 450-residue protein sequence, read N- to C-terminus: Tubulin alpha-2 chain (450 aa).

Gln-11 serves as a coordination point for GTP. Position 40 is an N6-acetyllysine (Lys-40). GTP-binding residues include Glu-71, Gly-144, Thr-145, Thr-179, Asn-206, and Asn-228. Position 71 (Glu-71) interacts with Mg(2+). Glu-254 is an active-site residue.

This sequence belongs to the tubulin family. Dimer of alpha and beta chains. A typical microtubule is a hollow water-filled tube with an outer diameter of 25 nm and an inner diameter of 15 nM. Alpha-beta heterodimers associate head-to-tail to form protofilaments running lengthwise along the microtubule wall with the beta-tubulin subunit facing the microtubule plus end conferring a structural polarity. Microtubules usually have 13 protofilaments but different protofilament numbers can be found in some organisms and specialized cells. Mg(2+) serves as cofactor. Undergoes a tyrosination/detyrosination cycle, the cyclic removal and re-addition of a C-terminal tyrosine residue by the enzymes tubulin tyrosine carboxypeptidase (TTCP) and tubulin tyrosine ligase (TTL), respectively. In terms of processing, acetylation of alpha chains at Lys-40 stabilizes microtubules and affects affinity and processivity of microtubule motors. This modification has a role in multiple cellular functions, ranging from cell motility, cell cycle progression or cell differentiation to intracellular trafficking and signaling.

The protein localises to the cytoplasm. Its subcellular location is the cytoskeleton. It catalyses the reaction GTP + H2O = GDP + phosphate + H(+). Its function is as follows. Tubulin is the major constituent of microtubules, a cylinder consisting of laterally associated linear protofilaments composed of alpha- and beta-tubulin heterodimers. Microtubules grow by the addition of GTP-tubulin dimers to the microtubule end, where a stabilizing cap forms. Below the cap, tubulin dimers are in GDP-bound state, owing to GTPase activity of alpha-tubulin. This Gossypium hirsutum (Upland cotton) protein is Tubulin alpha-2 chain.